The sequence spans 342 residues: Ketoreductase nvfG (342 aa).

The protein belongs to the NAD(P)-dependent epimerase/dehydratase family. Dihydroflavonol-4-reductase subfamily.

Its pathway is secondary metabolite biosynthesis; terpenoid biosynthesis. Its function is as follows. Ketoreductase; part of the gene cluster that mediates the biosynthesis of novofumigatonin, a heavily oxygenated meroterpenoid containing a unique orthoester moiety. The first step of the pathway is the synthesis of 3,5-dimethylorsellinic acid (DMOA) by the polyketide synthase nvfA via condensation of one acetyl-CoA starter unit with 3 malonyl-CoA units and 2 methylations. DMOA is then converted to farnesyl-DMOA by the farnesyltransferase nvfB. Epoxydation by FAD-dependent monooxygenase nvfK, followed by a protonation-initiated cyclization catalyzed by the terpene cyclase nvfL leads to the production of asnavolin H. The short chain dehydrogenase nvfC then as a 3-OH dehydrogenase of asnovolin H to yield chemesin D. There are two branches to synthesize asnovolin A from chemesin D. In one branch, chemesin D undergoes Baeyer-Villiger oxidation by nvfH, methylation by nvfJ, and enoyl reduction by the nvfM D enoylreductase that reduces the double bond between C-5'and C-6', to form respectively asnovolin I, asnovolin K, and asnovolin A. In the other branch, the methylation precedes the Baeyer-Villiger oxidation and the enoyl reduction to yield asnovolin A via the asnovolin J intermediate. Asnovolin A is further converted to fumigatonoid A by the Fe(II)/2-oxoglutarate-dependent dioxygenase nvfI that catalyzes an endoperoxidation reaction. The alpha/beta hydrolase nvfD then acts as an epimerase that converts fumigatonoid A to its C-5' epimer, which then undergoes spontaneous or nvfD-catalyzed lactonization. The following step utilizes the ketoreductase nvfG to produce fumigatonoid B. The dioxygenase nvfE further converts fumigatonoid B into fumigatonoid C. Finally the Fe(II)/2-oxoglutarate-dependent dioxygenase nvfF catalyzes two rounds of oxidation to transform fumigatonoid C into the end product, novofumigatonin A. In Aspergillus novofumigatus (strain IBT 16806), this protein is Ketoreductase nvfG.